A 1199-amino-acid chain; its full sequence is Tubulin-specific chaperone D (1199 aa).

Disordered regions lie at residues 1 to 23 and 337 to 361; these read MALS…VEDA and QHSI…QDDV. Residues 14–23 show a composition bias toward acidic residues; sequence DPVEDPVEDA. 4 HEAT repeats span residues 368–406, 603–639, 757–793, and 1111–1147; these read VIEQ…ADDV, EHTA…ARSL, AAAQ…PAFF, and GDVR…VLTY.

Belongs to the TBCD family. Found in a complex with at least ARL2, PPP2CB, PPP2R1A, PPP2R2A, PPP2R5E and TBCD. Interacts with PPP2CB. Part of a supercomplex made of cofactors A to E. Cofactors A and D function by capturing and stabilizing tubulin in a quasi-native conformation. Cofactor E binds to the cofactor D-tubulin complex; interaction with cofactor C then causes the release of tubulin polypeptides that are committed to the native state. Interacts with ARL2; interaction is enhanced with the GDP-bound form of ARL2. Does not interact with ARL3, ARL4A and ARL4D. Interacts with beta tubulin. Interacts with TBCE.

The protein localises to the cell junction. It localises to the tight junction. The protein resides in the lateral cell membrane. It is found in the cytoplasm. Its subcellular location is the adherens junction. The protein localises to the cytoskeleton. It localises to the microtubule organizing center. The protein resides in the centrosome. Its function is as follows. Tubulin-folding protein implicated in the first step of the tubulin folding pathway and required for tubulin complex assembly. Involved in the regulation of microtubule polymerization or depolymerization, it modulates microtubule dynamics by capturing GTP-bound beta-tubulin (TUBB). Its ability to interact with beta tubulin is regulated via its interaction with ARL2. Acts as a GTPase-activating protein (GAP) for ARL2. Induces microtubule disruption in absence of ARL2. Increases degradation of beta tubulin, when overexpressed in polarized cells. Promotes epithelial cell detachment, a process antagonized by ARL2. Induces tight adherens and tight junctions disassembly at the lateral cell membrane. Required for correct assembly and maintenance of the mitotic spindle, and proper progression of mitosis. Involved in neuron morphogenesis. This is Tubulin-specific chaperone D (TBCD) from Bos taurus (Bovine).